A 314-amino-acid polypeptide reads, in one-letter code: Olfactory receptor 5P72 (314 aa).

The Extracellular segment spans residues M1–V28. N8 carries an N-linked (GlcNAc...) asparagine glycan. Residues V29–I49 traverse the membrane as a helical segment. Residues L50–Q57 are Cytoplasmic-facing. Residues L58–S78 form a helical membrane-spanning segment. Over S79–I102 the chain is Extracellular. Cysteines 100 and 192 form a disulfide. Residues Q103–Y123 traverse the membrane as a helical segment. The Cytoplasmic segment spans residues D124–S136. The helical transmembrane segment at T137–L157 threads the bilayer. Residues N158–V199 lie on the Extracellular side of the membrane. The helical transmembrane segment at I200 to S220 threads the bilayer. Residues Y221–A240 are Cytoplasmic-facing. Residues F241–I261 traverse the membrane as a helical segment. At Y262 to N274 the chain is on the extracellular side. A helical transmembrane segment spans residues K275–L295. At R296–C314 the chain is on the cytoplasmic side.

This sequence belongs to the G-protein coupled receptor 1 family.

The protein resides in the cell membrane. Potential odorant receptor. The sequence is that of Olfactory receptor 5P72 from Mus musculus (Mouse).